Consider the following 447-residue polypeptide: GTPase Der (447 aa).

EngA-type G domains follow at residues 3–167 (PVVA…NLPD) and 181–354 (IKLA…KSAT). GTP contacts are provided by residues 9–16 (GRPNVGKS), 56–60 (DTGGF), 119–122 (NKAE), 187–194 (GRPNVGKS), 234–238 (DTAGL), and 299–302 (NKWD). Residues 355 to 439 (RKMSTPVLTR…PLRIQFKSSQ (85 aa)) form the KH-like domain.

The protein belongs to the TRAFAC class TrmE-Era-EngA-EngB-Septin-like GTPase superfamily. EngA (Der) GTPase family. As to quaternary structure, associates with the 50S ribosomal subunit.

In terms of biological role, GTPase that plays an essential role in the late steps of ribosome biogenesis. This Variovorax paradoxus (strain S110) protein is GTPase Der.